Here is a 250-residue protein sequence, read N- to C-terminus: Peroxiredoxin (250 aa).

A Thioredoxin domain is found at 6-163 (PLIGERFPEM…ILRIVKALKL (158 aa)). The active-site Cysteine sulfenic acid (-SOH) intermediate is C50. R126 lines the substrate pocket. An intrachain disulfide couples C207 to C213.

It belongs to the peroxiredoxin family. Prx6 subfamily. Homodecamer. Pentamer of dimers that assemble into a ring structure.

Its subcellular location is the cytoplasm. The catalysed reaction is a hydroperoxide + [thioredoxin]-dithiol = an alcohol + [thioredoxin]-disulfide + H2O. Functionally, thiol-specific peroxidase that catalyzes the reduction of hydrogen peroxide and organic hydroperoxides to water and alcohols, respectively. Plays a role in cell protection against oxidative stress by detoxifying peroxides. The polypeptide is Peroxiredoxin (Aeropyrum pernix (strain ATCC 700893 / DSM 11879 / JCM 9820 / NBRC 100138 / K1)).